Consider the following 417-residue polypeptide: mRNA cap guanine-N(7) methyltransferase (417 aa).

The mRNA cap 0 methyltransferase domain occupies 129-412; it reads SPIIKLRNFN…LYTVFAFKKV (284 aa). Residue 138–139 participates in mRNA binding; that stretch reads NN. S-adenosyl-L-methionine-binding residues include lysine 142, glycine 160, aspartate 182, aspartate 211, glutamine 237, and tyrosine 242.

This sequence belongs to the class I-like SAM-binding methyltransferase superfamily. mRNA cap 0 methyltransferase family.

Its subcellular location is the nucleus. The enzyme catalyses a 5'-end (5'-triphosphoguanosine)-ribonucleoside in mRNA + S-adenosyl-L-methionine = a 5'-end (N(7)-methyl 5'-triphosphoguanosine)-ribonucleoside in mRNA + S-adenosyl-L-homocysteine. Responsible for methylating the 5'-cap structure of mRNAs. The protein is mRNA cap guanine-N(7) methyltransferase (ABD1) of Candida glabrata (strain ATCC 2001 / BCRC 20586 / JCM 3761 / NBRC 0622 / NRRL Y-65 / CBS 138) (Yeast).